The sequence spans 310 residues: Cytochrome f (310 aa).

The first 23 residues, 1–23 (MRRLLSSTFAALIVGLAVFSAPA), serve as a signal peptide directing secretion. Positions 28, 48, 51, and 52 each coordinate heme. Residues 277 to 297 (IYGMLAFFAAVALAQIMLVLK) form a helical membrane-spanning segment.

It belongs to the cytochrome f family. The 4 large subunits of the cytochrome b6-f complex are cytochrome b6, subunit IV (17 kDa polypeptide, PetD), cytochrome f and the Rieske protein, while the 4 small subunits are PetG, PetL, PetM and PetN. The complex functions as a dimer. It depends on heme as a cofactor.

The protein localises to the cellular thylakoid membrane. In terms of biological role, component of the cytochrome b6-f complex, which mediates electron transfer between photosystem II (PSII) and photosystem I (PSI), cyclic electron flow around PSI, and state transitions. The chain is Cytochrome f from Synechococcus sp. (strain CC9311).